The primary structure comprises 522 residues: Peptide chain release factor 3 (522 aa).

The 268-residue stretch at 9 to 276 folds into the tr-type G domain; it reads KKRRTFAIIS…SFVNLAPAPQ (268 aa). Residues 18–25, 86–90, and 140–143 contribute to the GTP site; these read SHPDAGKT, DTPGH, and NKLD.

The protein belongs to the TRAFAC class translation factor GTPase superfamily. Classic translation factor GTPase family. PrfC subfamily.

It is found in the cytoplasm. Its function is as follows. Increases the formation of ribosomal termination complexes and stimulates activities of RF-1 and RF-2. It binds guanine nucleotides and has strong preference for UGA stop codons. It may interact directly with the ribosome. The stimulation of RF-1 and RF-2 is significantly reduced by GTP and GDP, but not by GMP. This is Peptide chain release factor 3 from Lactobacillus gasseri (strain ATCC 33323 / DSM 20243 / BCRC 14619 / CIP 102991 / JCM 1131 / KCTC 3163 / NCIMB 11718 / NCTC 13722 / AM63).